Consider the following 159-residue polypeptide: Regulatory protein RecX (159 aa).

It belongs to the RecX family.

It is found in the cytoplasm. Functionally, modulates RecA activity. The protein is Regulatory protein RecX of Acinetobacter baylyi (strain ATCC 33305 / BD413 / ADP1).